A 428-amino-acid polypeptide reads, in one-letter code: Enolase (428 aa).

Glutamine 163 contributes to the (2R)-2-phosphoglycerate binding site. Glutamate 205 serves as the catalytic Proton donor. The Mg(2+) site is built by aspartate 242, glutamate 285, and aspartate 312. (2R)-2-phosphoglycerate is bound by residues lysine 337, arginine 366, serine 367, and lysine 388. Catalysis depends on lysine 337, which acts as the Proton acceptor.

Belongs to the enolase family. Component of the RNA degradosome, a multiprotein complex involved in RNA processing and mRNA degradation. Mg(2+) is required as a cofactor.

The protein resides in the cytoplasm. It is found in the secreted. Its subcellular location is the cell surface. The enzyme catalyses (2R)-2-phosphoglycerate = phosphoenolpyruvate + H2O. It functions in the pathway carbohydrate degradation; glycolysis; pyruvate from D-glyceraldehyde 3-phosphate: step 4/5. Catalyzes the reversible conversion of 2-phosphoglycerate (2-PG) into phosphoenolpyruvate (PEP). It is essential for the degradation of carbohydrates via glycolysis. The protein is Enolase of Halorhodospira halophila (strain DSM 244 / SL1) (Ectothiorhodospira halophila (strain DSM 244 / SL1)).